Consider the following 315-residue polypeptide: tRNA dimethylallyltransferase (315 aa).

11–18 serves as a coordination point for ATP; it reads GPTASGKS. Residue 13 to 18 participates in substrate binding; the sequence is TASGKS. Interaction with substrate tRNA regions lie at residues 36-39 and 160-164; these read DSMQ and QRLIR.

The protein belongs to the IPP transferase family. Monomer. The cofactor is Mg(2+).

The catalysed reaction is adenosine(37) in tRNA + dimethylallyl diphosphate = N(6)-dimethylallyladenosine(37) in tRNA + diphosphate. Catalyzes the transfer of a dimethylallyl group onto the adenine at position 37 in tRNAs that read codons beginning with uridine, leading to the formation of N6-(dimethylallyl)adenosine (i(6)A). In Rickettsia bellii (strain RML369-C), this protein is tRNA dimethylallyltransferase.